Reading from the N-terminus, the 434-residue chain is D-amino acid dehydrogenase (434 aa).

3–17 (VLVLGSGVIGTASAY) is a binding site for FAD.

The protein belongs to the DadA oxidoreductase family. FAD serves as cofactor.

The catalysed reaction is a D-alpha-amino acid + A + H2O = a 2-oxocarboxylate + AH2 + NH4(+). Its pathway is amino-acid degradation; D-alanine degradation; NH(3) and pyruvate from D-alanine: step 1/1. In terms of biological role, oxidative deamination of D-amino acids. In Pseudomonas putida (strain ATCC 700007 / DSM 6899 / JCM 31910 / BCRC 17059 / LMG 24140 / F1), this protein is D-amino acid dehydrogenase.